Here is a 96-residue protein sequence, read N- to C-terminus: Co-chaperonin GroES (96 aa).

This sequence belongs to the GroES chaperonin family. As to quaternary structure, heptamer of 7 subunits arranged in a ring. Interacts with the chaperonin GroEL.

It is found in the cytoplasm. In terms of biological role, together with the chaperonin GroEL, plays an essential role in assisting protein folding. The GroEL-GroES system forms a nano-cage that allows encapsulation of the non-native substrate proteins and provides a physical environment optimized to promote and accelerate protein folding. GroES binds to the apical surface of the GroEL ring, thereby capping the opening of the GroEL channel. The sequence is that of Co-chaperonin GroES from Actinobacillus pleuropneumoniae serotype 7 (strain AP76).